A 1035-amino-acid chain; its full sequence is Ephrin type-A receptor 6 (1035 aa).

Positions M1–A22 are cleaved as a signal peptide. The Extracellular segment spans residues W23–V549. The region spanning Q33–R211 is the Eph LBD domain. Fibronectin type-III domains lie at P330 to D440 and A441 to E536. 3 N-linked (GlcNAc...) asparagine glycosylation sites follow: N342, N396, and N409. Residues I550–I570 form a helical membrane-spanning segment. The Cytoplasmic portion of the chain corresponds to T571 to V1035. Phosphotyrosine; by autocatalysis occurs at positions 605 and 611. The 314-residue stretch at I630–V943 folds into the Protein kinase domain. Residues I636–V644 and K662 contribute to the ATP site. D797 functions as the Proton acceptor in the catalytic mechanism. Residues Y830 and Y977 each carry the phosphotyrosine; by autocatalysis modification. An SAM domain is found at P960–H1024. Residues F1033–V1035 carry the PDZ-binding motif.

Belongs to the protein kinase superfamily. Tyr protein kinase family. Ephrin receptor subfamily. Heterotetramer upon binding of the ligand. The heterotetramer is composed of an ephrin dimer and a receptor dimer. Oligomerization is probably required to induce biological responses. Interacts (via SAM domain) with ANKS1A (via SAM domain).

The protein localises to the membrane. The enzyme catalyses L-tyrosyl-[protein] + ATP = O-phospho-L-tyrosyl-[protein] + ADP + H(+). Its function is as follows. Receptor tyrosine kinase which binds promiscuously GPI-anchored ephrin-A family ligands residing on adjacent cells, leading to contact-dependent bidirectional signaling into neighboring cells. The signaling pathway downstream of the receptor is referred to as forward signaling while the signaling pathway downstream of the ephrin ligand is referred to as reverse signaling. The chain is Ephrin type-A receptor 6 (Epha6) from Mus musculus (Mouse).